Here is a 149-residue protein sequence, read N- to C-terminus: 2S seed storage albumin protein (149 aa).

The first 22 residues, 1 to 22, serve as a signal peptide directing secretion; the sequence is MKLFIILATATLLIAATQATYP. 4 disulfides stabilise this stretch: Cys38/Cys98, Cys52/Cys87, Cys88/Cys133, and Cys100/Cys140. Positions 121-128 are igE-binding; sequence EGVRDLKE.

The protein belongs to the 2S seed storage albumins family. As to expression, expressed in seeds (at protein level).

Its function is as follows. Seed storage protein. This is 2S seed storage albumin protein from Fagopyrum esculentum (Common buckwheat).